We begin with the raw amino-acid sequence, 472 residues long: ATP synthase subunit beta (472 aa).

155 to 162 (GGAGVGKT) lines the ATP pocket.

Belongs to the ATPase alpha/beta chains family. As to quaternary structure, F-type ATPases have 2 components, CF(1) - the catalytic core - and CF(0) - the membrane proton channel. CF(1) has five subunits: alpha(3), beta(3), gamma(1), delta(1), epsilon(1). CF(0) has three main subunits: a(1), b(2) and c(9-12). The alpha and beta chains form an alternating ring which encloses part of the gamma chain. CF(1) is attached to CF(0) by a central stalk formed by the gamma and epsilon chains, while a peripheral stalk is formed by the delta and b chains.

It localises to the cell membrane. It carries out the reaction ATP + H2O + 4 H(+)(in) = ADP + phosphate + 5 H(+)(out). Produces ATP from ADP in the presence of a proton gradient across the membrane. The catalytic sites are hosted primarily by the beta subunits. The chain is ATP synthase subunit beta from Fervidobacterium islandicum.